Here is a 436-residue protein sequence, read N- to C-terminus: Xylose isomerase (436 aa).

Positions 306 and 308 each coordinate Mg(2+).

This sequence belongs to the xylose isomerase family. Homotetramer. Requires Mg(2+) as cofactor.

It localises to the cytoplasm. It catalyses the reaction alpha-D-xylose = alpha-D-xylulofuranose. The protein is Xylose isomerase of Rhizobium rhizogenes (strain K84 / ATCC BAA-868) (Agrobacterium radiobacter).